The sequence spans 504 residues: Peroxisomal catalase (504 aa).

Residues His63 and Asn136 contribute to the active site. A heme-binding site is contributed by Tyr345. A Microbody targeting signal motif is present at residues 502-504 (NKF).

The protein belongs to the catalase family. Heme is required as a cofactor.

Its subcellular location is the peroxisome matrix. It carries out the reaction 2 H2O2 = O2 + 2 H2O. Catalyzes the degradation of hydrogen peroxide (H(2)O(2)) generated by peroxisomal oxidases to water and oxygen, thereby protecting cells from the toxic effects of hydrogen peroxide. The chain is Peroxisomal catalase (CTA1) from Candida boidinii (Yeast).